The following is a 439-amino-acid chain: MAESPAFLSAQDVGSFAYLTIKDRTPQILTKVIDTLHRHKSEFFEKHGEEGVEAEKKAISLLSKLRNELQTDKPIIPLVDKCVDTDIWNQYLEYQRSLLNEGDGEPRWFFSPWLFVECYMYRRIHEAIMQSPPIHDFDVFKESKDENFFESQDSINALCTHLLQLKPITDLGEKQIQDEFFKLLQISLWGNKCDLSLSGGESSSQKADIINSLKDLKPFILVNETESLWALLSKLKKTAEPPAVRVDIVLDNSGFELVTDLVFADFLLSSELATEIHFHGKIIPWFVSDVTVRDFEWIVEHMKGSHLESMSACGAAWEAYVGMKKWVYHDHAFWTLPHPFCAMPQVAPDLYAELQKAGVVLFKGDLNYRKLMGDRKWKFTVPFHQALSGFHPAPLCSIRTLKCELQVGLQPGQAEHLTASDPHWLTTGKYGIFQFDGPL.

Ala2 is subject to N-acetylalanine. A Phosphoserine modification is found at Ser4. At Lys40 the chain carries N6-acetyllysine. Mn(2+)-binding residues include Asp251 and Asn252. 251 to 252 (DN) is a substrate binding site. 2 residues coordinate S-adenosyl-L-methionine: Glu256 and Asp289. Asp289 serves as a coordination point for Mn(2+). Substrate contacts are provided by residues 365–369 (DLNYR) and Lys402. The Subfamily III RTxK motif signature appears at 399-402 (RTLK).

Belongs to the damage-control phosphatase family. Sugar phosphate phosphatase III subfamily. It depends on Mn(2+) as a cofactor. Ni(2+) is required as a cofactor. Automethylated.

It carries out the reaction beta-D-fructose 1-phosphate + H2O = D-fructose + phosphate. The catalysed reaction is beta-D-fructose 6-phosphate = dihydroxyacetone + D-glyceraldehyde 3-phosphate. It catalyses the reaction L-glutamyl-[protein] + S-adenosyl-L-methionine = [protein]-L-glutamate 5-O-methyl ester + S-adenosyl-L-homocysteine. Its function is as follows. Metal-dependent phosphatase that shows phosphatase activity against several substrates, including fructose-1-phosphate and fructose-6-phosphate. Its preference for fructose-1-phosphate, a strong glycating agent that causes DNA damage rather than a canonical yeast metabolite, suggests a damage-control function in hexose phosphate metabolism. Has also been shown to have O-methyltransferase activity that methylates glutamate residues of target proteins to form gamma-glutamyl methyl ester residues. Possibly methylates PCNA, suggesting it is involved in the DNA damage response. The polypeptide is Damage-control phosphatase ARMT1 (Rattus norvegicus (Rat)).